The sequence spans 96 residues: Protein C4 (96 aa).

Glycine 2 carries the N-myristoyl glycine; by host lipid modification. The interval 66–96 (STDDLQGEDSRQPMTLTPRQLTQDVSRRLLM) is disordered. The segment covering 77-89 (QPMTLTPRQLTQD) has biased composition (polar residues).

The protein belongs to the geminiviridae protein AC4/C4 family.

It is found in the host cell membrane. In terms of biological role, pathogenicity determinant. May act as a suppressor of RNA-mediated gene silencing, also known as post-transcriptional gene silencing (PTGS), a mechanism of plant viral defense that limits the accumulation of viral RNAs. In Solanum lycopersicum (Tomato), this protein is Protein C4.